Reading from the N-terminus, the 383-residue chain is 23S rRNA (uracil(747)-C(5))-methyltransferase RlmC (383 aa).

Cysteine 3, cysteine 11, cysteine 14, and cysteine 89 together coordinate [4Fe-4S] cluster. S-adenosyl-L-methionine-binding residues include glutamine 214, phenylalanine 243, glutamate 270, and asparagine 315. Residue cysteine 342 is the Nucleophile of the active site.

The protein belongs to the class I-like SAM-binding methyltransferase superfamily. RNA M5U methyltransferase family. RlmC subfamily.

It carries out the reaction uridine(747) in 23S rRNA + S-adenosyl-L-methionine = 5-methyluridine(747) in 23S rRNA + S-adenosyl-L-homocysteine + H(+). In terms of biological role, catalyzes the formation of 5-methyl-uridine at position 747 (m5U747) in 23S rRNA. The protein is 23S rRNA (uracil(747)-C(5))-methyltransferase RlmC of Actinobacillus succinogenes (strain ATCC 55618 / DSM 22257 / CCUG 43843 / 130Z).